The sequence spans 42 residues: Large ribosomal subunit protein bL36 (42 aa).

This sequence belongs to the bacterial ribosomal protein bL36 family.

The protein is Large ribosomal subunit protein bL36 of Anaplasma phagocytophilum (strain HZ).